A 404-amino-acid chain; its full sequence is Rhomboid-related protein 3 (404 aa).

2 consecutive EF-hand domains span residues 34–69 and 70–105; these read APED…HSSK and LDPH…KRSN. The next 7 membrane-spanning stretches (helical) occupy residues 164 to 184, 227 to 247, 250 to 270, 274 to 294, 305 to 324, 338 to 358, and 371 to 391; these read WFMI…GVLL, LGLN…VHGA, IGLV…VADM, VVGS…NIVM, LLRM…RAVW, PSFV…VVVL, and WWIF…WNIF. Ser278 acts as the Nucleophile in catalysis. His343 is a catalytic residue.

The protein belongs to the peptidase S54 family.

It localises to the membrane. The enzyme catalyses Cleaves type-1 transmembrane domains using a catalytic dyad composed of serine and histidine that are contributed by different transmembrane domains.. Functionally, may be involved in regulated intramembrane proteolysis and the subsequent release of functional polypeptides from their membrane anchors. The chain is Rhomboid-related protein 3 (Rhbdl3) from Mus musculus (Mouse).